Consider the following 592-residue polypeptide: Alanine aminotransferase, mitochondrial (592 aa).

A mitochondrion-targeting transit peptide spans 1–64 (MLSLSAKNHF…RKVRPVLQRH (64 aa)). Ser77 is subject to Phosphoserine. Positions 258, 259, 284, 340, and 409 each coordinate pyridoxal 5'-phosphate. The residue at position 412 (Lys412) is an N6-(pyridoxal phosphate)lysine. Residue Arg421 coordinates pyridoxal 5'-phosphate.

It belongs to the class-I pyridoxal-phosphate-dependent aminotransferase family. Alanine aminotransferase subfamily. As to quaternary structure, homodimer. The cofactor is pyridoxal 5'-phosphate.

It is found in the mitochondrion matrix. It carries out the reaction L-alanine + 2-oxoglutarate = pyruvate + L-glutamate. The protein operates within amino-acid degradation; L-alanine degradation via transaminase pathway; pyruvate from L-alanine: step 1/1. In terms of biological role, alanine aminotransferase involved in both alanine biosynthesis and utilization. Under respiratory conditions, constitutes the sole pathway for alanine biosynthesis and catabolism. Under fermentative conditions, it plays a catabolic role and alanine is mainly synthesized through an alternative pathway. The sequence is that of Alanine aminotransferase, mitochondrial (ALT1) from Saccharomyces cerevisiae (strain ATCC 204508 / S288c) (Baker's yeast).